The primary structure comprises 579 residues: Rho guanine nucleotide exchange factor 25 (579 aa).

Disordered stretches follow at residues 27-61 (AVPG…GERE) and 172-194 (VKAQ…EQKK). The 177-residue stretch at 199 to 375 (RSMFVLSELV…CFVPKRCNDM (177 aa)) folds into the DH domain. An important for binding to Rho GTPases region spans residues 317 to 338 (LGHRLQLSDLLIKPVQRIMKYQ). A PH domain is found at 380-499 (RLRGFEGKLT…ESQTNSLGRS (120 aa)). Residues 472 to 498 (SQRDFLNALQSPIEYQRRESQTNSLGR) form a sufficient to bind activated GNAQ region. 2 disordered regions span residues 487–516 (QRRE…VSMH) and 546–579 (LSET…EDEL).

In terms of assembly, interacts with activated GNAQ and GNA11. Interacts with RHOA, CDC42 and RAC1. Interacts (via the DH domain) with POPDC1 (via the C-terminus cytoplasmic tail).

It is found in the cytoplasm. It localises to the myofibril. The protein localises to the sarcomere. Its subcellular location is the cell membrane. Functionally, may play a role in actin cytoskeleton reorganization in different tissues since its activation induces formation of actin stress fibers. It works as a guanine nucleotide exchange factor for Rho family of small GTPases. Links specifically G alpha q/11-coupled receptors to RHOA activation. May be an important regulator of processes involved in axon and dendrite formation. In neurons seems to be an exchange factor primarily for RAC1. Involved in skeletal myogenesis. This is Rho guanine nucleotide exchange factor 25 (Arhgef25) from Rattus norvegicus (Rat).